The sequence spans 172 residues: MIDLGISKLALIGAVALVVIGPERLPKVARTAGALIGRAQRYIADVKAEVSREIELEELRKMRTEFEEAARNVEQTIHQEVSRHTSEINERLNEALGDPASRQTATQAAEWRPAPAKSRNGRNSWRNKQLAMPKWYRRKQGVRMWAQSGAARVKRHRPPIVAAQSRGRSFFE.

The helical transmembrane segment at 1–21 (MIDLGISKLALIGAVALVVIG) threads the bilayer. Positions 97 to 129 (GDPASRQTATQAAEWRPAPAKSRNGRNSWRNKQ) are disordered.

Belongs to the TatB family. As to quaternary structure, the Tat system comprises two distinct complexes: a TatABC complex, containing multiple copies of TatA, TatB and TatC subunits, and a separate TatA complex, containing only TatA subunits. Substrates initially bind to the TatABC complex, which probably triggers association of the separate TatA complex to form the active translocon.

It localises to the cell inner membrane. In terms of biological role, part of the twin-arginine translocation (Tat) system that transports large folded proteins containing a characteristic twin-arginine motif in their signal peptide across membranes. Together with TatC, TatB is part of a receptor directly interacting with Tat signal peptides. TatB may form an oligomeric binding site that transiently accommodates folded Tat precursor proteins before their translocation. The polypeptide is Sec-independent protein translocase protein TatB (Ralstonia nicotianae (strain ATCC BAA-1114 / GMI1000) (Ralstonia solanacearum)).